The following is a 369-amino-acid chain: 3-dehydroquinate synthase (369 aa).

NAD(+) contacts are provided by residues 75 to 80, 109 to 113, 133 to 134, Lys-146, Lys-155, and 173 to 176; these read DGEEHK, GVIGD, TT, and TLKT. Zn(2+)-binding residues include Glu-188, His-251, and His-268.

Belongs to the sugar phosphate cyclases superfamily. Dehydroquinate synthase family. Co(2+) serves as cofactor. The cofactor is Zn(2+). It depends on NAD(+) as a cofactor.

The protein resides in the cytoplasm. The catalysed reaction is 7-phospho-2-dehydro-3-deoxy-D-arabino-heptonate = 3-dehydroquinate + phosphate. Its pathway is metabolic intermediate biosynthesis; chorismate biosynthesis; chorismate from D-erythrose 4-phosphate and phosphoenolpyruvate: step 2/7. Functionally, catalyzes the conversion of 3-deoxy-D-arabino-heptulosonate 7-phosphate (DAHP) to dehydroquinate (DHQ). This chain is 3-dehydroquinate synthase, found in Legionella pneumophila (strain Lens).